The sequence spans 391 residues: 1-acyl-sn-glycerol-3-phosphate acyltransferase 2 (391 aa).

A helical membrane pass occupies residues 3–23; it reads MAAAAVIVPLGILFFISGLVV. The HXXXXD motif motif lies at 92-97; it reads HRSDID. 2 consecutive transmembrane segments (helical) span residues 306–326 and 334–354; these read LAVV…FLHW and KGIA…QILI. Residues 358–391 are disordered; sequence QSERSTPAKVAPAKPKDKHQSGSSSQTEVEEKQK.

This sequence belongs to the 1-acyl-sn-glycerol-3-phosphate acyltransferase family.

The protein localises to the endoplasmic reticulum membrane. It carries out the reaction a 1-acyl-sn-glycero-3-phosphate + an acyl-CoA = a 1,2-diacyl-sn-glycero-3-phosphate + CoA. The protein operates within phospholipid metabolism; CDP-diacylglycerol biosynthesis; CDP-diacylglycerol from sn-glycerol 3-phosphate: step 2/3. Functionally, converts lysophosphatidic acid (LPA) into phosphatidic acid by incorporating acyl moiety at the 2 position. The sequence is that of 1-acyl-sn-glycerol-3-phosphate acyltransferase 2 (LPAT2) from Brassica oleracea (Wild cabbage).